The chain runs to 430 residues: Dihydrolipoyllysine-residue acetyltransferase component of pyruvate dehydrogenase complex (430 aa).

The Lipoyl-binding domain maps to 2–77 (AFEFRLPDIG…VVGDVIVKID (76 aa)). K43 is subject to N6-lipoyllysine. Residues 80–122 (DAEDMQFKGHDDDSSSKEEPAKEEAPAEQAPVATQTEEVDENR) form a disordered region. Residues 84–104 (MQFKGHDDDSSSKEEPAKEEA) show a composition bias toward basic and acidic residues. A Peripheral subunit-binding (PSBD) domain is found at 125 to 162 (KAMPSVRKYAREKGVNIKAVSGSGKNGRITKEDVDAYL). The segment at 165 to 200 (GAPTASNESAASATSEEVAETPAAPAAVTLEGDFPE) is disordered. A compositionally biased stretch (low complexity) spans 166 to 193 (APTASNESAASATSEEVAETPAAPAAVT). The active site involves H401.

It belongs to the 2-oxoacid dehydrogenase family. Forms a 24-polypeptide structural core with octahedral symmetry. (R)-lipoate is required as a cofactor.

The enzyme catalyses N(6)-[(R)-dihydrolipoyl]-L-lysyl-[protein] + acetyl-CoA = N(6)-[(R)-S(8)-acetyldihydrolipoyl]-L-lysyl-[protein] + CoA. Its function is as follows. The pyruvate dehydrogenase complex catalyzes the overall conversion of pyruvate to acetyl-CoA and CO(2). It contains multiple copies of three enzymatic components: pyruvate dehydrogenase (E1), dihydrolipoamide acetyltransferase (E2) and lipoamide dehydrogenase (E3). The chain is Dihydrolipoyllysine-residue acetyltransferase component of pyruvate dehydrogenase complex (pdhC) from Staphylococcus aureus (strain COL).